We begin with the raw amino-acid sequence, 119 residues long: Flagellar transcriptional regulator FlhD (119 aa).

The protein belongs to the FlhD family. Homodimer; disulfide-linked. Forms a heterohexamer composed of two FlhC and four FlhD subunits. Each FlhC binds a FlhD dimer, forming a heterotrimer, and a hexamer assembles by dimerization of two heterotrimers.

It localises to the cytoplasm. Functionally, functions in complex with FlhC as a master transcriptional regulator that regulates transcription of several flagellar and non-flagellar operons by binding to their promoter region. Activates expression of class 2 flagellar genes, including fliA, which is a flagellum-specific sigma factor that turns on the class 3 genes. Also regulates genes whose products function in a variety of physiological pathways. In Shigella boydii serotype 4 (strain Sb227), this protein is Flagellar transcriptional regulator FlhD.